The sequence spans 199 residues: Glycerol-3-phosphate acyltransferase (199 aa).

5 helical membrane passes run 3–23 (AAVW…GVLV), 50–70 (WGPA…AVLV), 78–98 (DWML…SVFL), 113–133 (LLFL…SVIL), and 154–174 (LALG…LLIF).

This sequence belongs to the PlsY family. In terms of assembly, probably interacts with PlsX.

The protein localises to the cell inner membrane. The enzyme catalyses an acyl phosphate + sn-glycerol 3-phosphate = a 1-acyl-sn-glycero-3-phosphate + phosphate. It functions in the pathway lipid metabolism; phospholipid metabolism. Its function is as follows. Catalyzes the transfer of an acyl group from acyl-phosphate (acyl-PO(4)) to glycerol-3-phosphate (G3P) to form lysophosphatidic acid (LPA). This enzyme utilizes acyl-phosphate as fatty acyl donor, but not acyl-CoA or acyl-ACP. The protein is Glycerol-3-phosphate acyltransferase of Thermus thermophilus (strain ATCC 27634 / DSM 579 / HB8).